Reading from the N-terminus, the 156-residue chain is Transcription antitermination protein NusB (156 aa).

It belongs to the NusB family.

Involved in transcription antitermination. Required for transcription of ribosomal RNA (rRNA) genes. Binds specifically to the boxA antiterminator sequence of the ribosomal RNA (rrn) operons. In Rickettsia felis (strain ATCC VR-1525 / URRWXCal2) (Rickettsia azadi), this protein is Transcription antitermination protein NusB.